Consider the following 464-residue polypeptide: ATP synthase subunit beta (464 aa).

G151 to T158 contributes to the ATP binding site.

Belongs to the ATPase alpha/beta chains family. In terms of assembly, F-type ATPases have 2 components, CF(1) - the catalytic core - and CF(0) - the membrane proton channel. CF(1) has five subunits: alpha(3), beta(3), gamma(1), delta(1), epsilon(1). CF(0) has three main subunits: a(1), b(2) and c(9-12). The alpha and beta chains form an alternating ring which encloses part of the gamma chain. CF(1) is attached to CF(0) by a central stalk formed by the gamma and epsilon chains, while a peripheral stalk is formed by the delta and b chains.

The protein localises to the cell membrane. It catalyses the reaction ATP + H2O + 4 H(+)(in) = ADP + phosphate + 5 H(+)(out). Its function is as follows. Produces ATP from ADP in the presence of a proton gradient across the membrane. The catalytic sites are hosted primarily by the beta subunits. The sequence is that of ATP synthase subunit beta from Bacillus cytotoxicus (strain DSM 22905 / CIP 110041 / 391-98 / NVH 391-98).